A 339-amino-acid polypeptide reads, in one-letter code: DNA-directed RNA polymerase subunit alpha (339 aa).

The tract at residues M1–E233 is alpha N-terminal domain (alpha-NTD). The segment at K264–F339 is alpha C-terminal domain (alpha-CTD).

Belongs to the RNA polymerase alpha chain family. As to quaternary structure, in plastids the minimal PEP RNA polymerase catalytic core is composed of four subunits: alpha, beta, beta', and beta''. When a (nuclear-encoded) sigma factor is associated with the core the holoenzyme is formed, which can initiate transcription.

The protein resides in the plastid. It is found in the chloroplast. It carries out the reaction RNA(n) + a ribonucleoside 5'-triphosphate = RNA(n+1) + diphosphate. Its function is as follows. DNA-dependent RNA polymerase catalyzes the transcription of DNA into RNA using the four ribonucleoside triphosphates as substrates. The chain is DNA-directed RNA polymerase subunit alpha from Thinopyrum elongatum (Tall wheatgrass).